Consider the following 379-residue polypeptide: Inactive 2'-5'-oligoadenylate synthase 1B (379 aa).

The Cytoplasmic segment spans residues 1–355 (MEQELRSIPA…VPTEVDIPSQ (355 aa)). The helical; Anchor for type IV membrane protein transmembrane segment at 356 to 374 (NYFFHIICLIFWLLLRLIF) threads the bilayer. Residues 375–379 (GKHSV) are Extracellular-facing.

The protein belongs to the 2-5A synthase family. Interacts with OSBPL1A and ABCF3. As to expression, highly expressed in the brain, liver, spleen and heart.

The protein resides in the endoplasmic reticulum membrane. In terms of biological role, does not have 2'-5'-OAS activity, but can bind double-stranded RNA. Displays antiviral activity against viruses via an alternative antiviral pathway independent of RNase L. The polypeptide is Inactive 2'-5'-oligoadenylate synthase 1B (Oas1b) (Rattus norvegicus (Rat)).